The following is a 258-amino-acid chain: Thiazole synthase (258 aa).

Lys-100 (schiff-base intermediate with DXP) is an active-site residue. 1-deoxy-D-xylulose 5-phosphate-binding positions include Gly-161, 187–188 (AG), and 209–210 (NT).

This sequence belongs to the ThiG family. In terms of assembly, homotetramer. Forms heterodimers with either ThiH or ThiS.

It localises to the cytoplasm. It catalyses the reaction [ThiS sulfur-carrier protein]-C-terminal-Gly-aminoethanethioate + 2-iminoacetate + 1-deoxy-D-xylulose 5-phosphate = [ThiS sulfur-carrier protein]-C-terminal Gly-Gly + 2-[(2R,5Z)-2-carboxy-4-methylthiazol-5(2H)-ylidene]ethyl phosphate + 2 H2O + H(+). Its pathway is cofactor biosynthesis; thiamine diphosphate biosynthesis. Its function is as follows. Catalyzes the rearrangement of 1-deoxy-D-xylulose 5-phosphate (DXP) to produce the thiazole phosphate moiety of thiamine. Sulfur is provided by the thiocarboxylate moiety of the carrier protein ThiS. In vitro, sulfur can be provided by H(2)S. The polypeptide is Thiazole synthase (Campylobacter jejuni subsp. jejuni serotype O:6 (strain 81116 / NCTC 11828)).